We begin with the raw amino-acid sequence, 216 residues long: Pyrrolidone-carboxylate peptidase (216 aa).

Residues E80, C143, and H168 contribute to the active site.

It belongs to the peptidase C15 family. Homotetramer.

Its subcellular location is the cytoplasm. It catalyses the reaction Release of an N-terminal pyroglutamyl group from a polypeptide, the second amino acid generally not being Pro.. Functionally, removes 5-oxoproline from various penultimate amino acid residues except L-proline. The sequence is that of Pyrrolidone-carboxylate peptidase from Cupriavidus pinatubonensis (strain JMP 134 / LMG 1197) (Cupriavidus necator (strain JMP 134)).